The sequence spans 363 residues: Lactose transport ATP-binding protein LacK (363 aa).

One can recognise an ABC transporter domain in the interval 4 to 234 (VRLTDIRKSY…PDNMFVAGFI (231 aa)). Position 36 to 43 (36 to 43 (GPSGCGKS)) interacts with ATP.

It belongs to the ABC transporter superfamily.

The protein resides in the cell inner membrane. Its function is as follows. Part of the binding-protein-dependent transport system for lactose. Probably responsible for energy coupling to the transport system. The protein is Lactose transport ATP-binding protein LacK (lacK) of Rhizobium radiobacter (Agrobacterium tumefaciens).